A 160-amino-acid chain; its full sequence is Putative UPF0479 protein YLR466C-A (160 aa).

The next 2 helical transmembrane spans lie at isoleucine 39–glutamine 59 and valine 136–histidine 156.

This sequence belongs to the UPF0479 family.

It is found in the membrane. The chain is Putative UPF0479 protein YLR466C-A from Saccharomyces cerevisiae (strain ATCC 204508 / S288c) (Baker's yeast).